A 405-amino-acid chain; its full sequence is Angiopoietin-related protein 4 (405 aa).

Positions 1-23 (MRCAPTAGAALVLCAATAGLLSA) are cleaved as a signal peptide. Positions 54–146 (GLREHVERTR…QNLQSQIDLL (93 aa)) form a coiled coil. N-linked (GlcNAc...) asparagine glycosylation is present at Asn176. The 223-residue stretch at 178–400 (TRLHRPPRDC…ATTLLIQPME (223 aa)) folds into the Fibrinogen C-terminal domain. Cys187 and Cys215 are oxidised to a cystine. N-linked (GlcNAc...) asparagine glycans are attached at residues Asn231 and Asn237. Cys340 and Cys353 form a disulfide bridge.

In terms of assembly, homooligomer; disulfide-linked via Cys residues in the N-terminal part of the protein. The homooligomer undergoes proteolytic processing to release its carboxyl fibrinogen-like domain, which circulates as a monomer. The homooligomer unprocessed form is able to interact with the extracellular matrix. Post-translationally, N-glycosylated. Forms disulfide-linked dimers and tetramers. In terms of processing, cleaved into a smaller N-terminal chain and a larger chain that contains the fibrinogen C-terminal domain; both cleaved and uncleaved forms are detected in the extracellular space. The cleaved form is not present within the cell.

The protein resides in the secreted. It localises to the extracellular space. It is found in the extracellular matrix. Its function is as follows. Mediates inactivation of the lipoprotein lipase LPL, and thereby plays a role in the regulation of triglyceride clearance from the blood serum and in lipid metabolism. May also play a role in regulating glucose homeostasis and insulin sensitivity. Inhibits proliferation, migration, and tubule formation of endothelial cells and reduces vascular leakage. Upon heterologous expression, inhibits the adhesion of endothelial cell to the extracellular matrix (ECM), and inhibits the reorganization of the actin cytoskeleton, formation of actin stress fibers and focal adhesions in endothelial cells that have adhered to ANGPTL4-containing ECM (in vitro). Depending on context, may modulate tumor-related angiogenesis. In terms of biological role, mediates inactivation of the lipoprotein lipase LPL, and thereby plays an important role in the regulation of triglyceride clearance from the blood serum and in lipid metabolism. Has higher activity in LPL inactivation than the uncleaved protein. The sequence is that of Angiopoietin-related protein 4 (Angptl4) from Rattus norvegicus (Rat).